Here is a 367-residue protein sequence, read N- to C-terminus: Pepsin A (367 aa).

The propeptide at 1–42 (SIHRVPLKKGKSLRKQLKDHGLLEDFLKKHPYNPASKYHPVL) is activation peptide. The region spanning 59-364 (YYGTISIGTP…DRANNKVGLS (306 aa)) is the Peptidase A1 domain. Residue D77 is part of the active site. Residues C90 and C95 are joined by a disulfide bond. N-linked (GlcNAc...) asparagine glycosylation is present at N113. A disulfide bridge connects residues C251 and C255. Residue D260 is part of the active site. A disulfide bridge links C290 with C323.

Belongs to the peptidase A1 family.

It catalyses the reaction Preferential cleavage: hydrophobic, preferably aromatic, residues in P1 and P1' positions. Cleaves 1-Phe-|-Val-2, 4-Gln-|-His-5, 13-Glu-|-Ala-14, 14-Ala-|-Leu-15, 15-Leu-|-Tyr-16, 16-Tyr-|-Leu-17, 23-Gly-|-Phe-24, 24-Phe-|-Phe-25 and 25-Phe-|-Tyr-26 bonds in the B chain of insulin.. Its function is as follows. Shows particularly broad specificity; although bonds involving phenylalanine and leucine are preferred, many others are also cleaved to some extent. The polypeptide is Pepsin A (PGA) (Gallus gallus (Chicken)).